We begin with the raw amino-acid sequence, 106 residues long: Iron-sulfur cluster assembly protein CyaY (106 aa).

It belongs to the frataxin family.

In terms of biological role, involved in iron-sulfur (Fe-S) cluster assembly. May act as a regulator of Fe-S biogenesis. The protein is Iron-sulfur cluster assembly protein CyaY of Escherichia coli O7:K1 (strain IAI39 / ExPEC).